The primary structure comprises 365 residues: Chorismate synthase (365 aa).

Residues arginine 48 and arginine 54 each coordinate NADP(+). FMN is bound by residues 131-133 (RSS), 243-244 (NA), glycine 288, 303-307 (KPTSS), and arginine 329.

Belongs to the chorismate synthase family. As to quaternary structure, homotetramer. FMNH2 serves as cofactor.

The enzyme catalyses 5-O-(1-carboxyvinyl)-3-phosphoshikimate = chorismate + phosphate. The protein operates within metabolic intermediate biosynthesis; chorismate biosynthesis; chorismate from D-erythrose 4-phosphate and phosphoenolpyruvate: step 7/7. Catalyzes the anti-1,4-elimination of the C-3 phosphate and the C-6 proR hydrogen from 5-enolpyruvylshikimate-3-phosphate (EPSP) to yield chorismate, which is the branch point compound that serves as the starting substrate for the three terminal pathways of aromatic amino acid biosynthesis. This reaction introduces a second double bond into the aromatic ring system. The protein is Chorismate synthase of Rhizobium etli (strain ATCC 51251 / DSM 11541 / JCM 21823 / NBRC 15573 / CFN 42).